The sequence spans 407 residues: MDFAMSAKAIDYRTRLSDFMTEHVFGAEADYDDYRRAAGPADHTAPPIIEELKTKAKDRGLWNLFLSAESGLTNLEYAPLAEMTGWSMEIAPEALNCAAPDTGNMEILHMFGTEQQRAQWLRPLLDGKIRSAFSMTEPAVASSDARNIETTISRDGADYVINGRKWWTSGAADPRCKILIVMGRTNPDAAAHQQQSMVLVPIDTPGVTIVRSTPVFGWQDRHGHCEIDYHNVRVPATNLLGEEGSGFAIAQARLGPGRIHHCMRALGAAERALALMVNRVRNRVAFGRPLAEQGVVQQAIAQSRNEIDQARLLCEKAAWTIDQHGNKEARHLVAMIKAVAPRVACDVIDRAIQVHGAAGVSDDTPLARLYGWHRAMRIFDGPDEVHLRSIARAELSREKSTFAAAVT.

Belongs to the acyl-CoA dehydrogenase family. The cofactor is FAD.

It carries out the reaction a 2,3-saturated acyl-CoA + A = a 2,3-dehydroacyl-CoA + AH2. The chain is Probable acyl-CoA dehydrogenase FadE2 from Mycobacterium tuberculosis (strain ATCC 25618 / H37Rv).